A 257-amino-acid chain; its full sequence is Acetylglutamate kinase (257 aa).

Residues 43 to 44 (GG), arginine 65, and asparagine 157 each bind substrate. ATP-binding positions include 180 to 185 (DVSGIL) and 208 to 210 (IIT).

The protein belongs to the acetylglutamate kinase family. ArgB subfamily. Homodimer.

The protein resides in the cytoplasm. It catalyses the reaction N-acetyl-L-glutamate + ATP = N-acetyl-L-glutamyl 5-phosphate + ADP. It participates in amino-acid biosynthesis; L-arginine biosynthesis; N(2)-acetyl-L-ornithine from L-glutamate: step 2/4. Catalyzes the ATP-dependent phosphorylation of N-acetyl-L-glutamate. The polypeptide is Acetylglutamate kinase (Pectobacterium carotovorum subsp. carotovorum (strain PC1)).